The chain runs to 1004 residues: Glutamate [NMDA] receptor subunit 1 (1004 aa).

The first 39 residues, 1–39, serve as a signal peptide directing secretion; the sequence is MAGTDSPAAARFVYRCLLFAPAIVVGLLLPLTLPPIAAA. At 40 to 585 the chain is on the extracellular side; it reads QRHTASDNPS…TLVSFLQPFS (546 aa). N-linked (GlcNAc...) asparagine glycans are attached at residues Asn270, Asn326, Asn357, Asn409, Asn466, Asn493, and Asn513. Glycine contacts are provided by residues 542 to 544 and Arg549; that span reads PLT. Residues 586–606 traverse the membrane as a helical segment; the sequence is NTLWILVMVSVHVVALVLYLL. The Cytoplasmic segment spans residues 607–663; the sequence is DRFSPFGRFKLSHSDSNEEKALNLSSAVWFAWGVLLNSGIGEGTPRSFSARVLGMVW. The chain crosses the membrane as a helical span at residues 664 to 684; sequence AGFAMIIVASYTANLAAFLVL. At 685–843 the chain is on the extracellular side; the sequence is ERPKTKLSGI…KTPNTLGLKN (159 aa). A glycan (N-linked (GlcNAc...) asparagine) is linked at Asn705. Glycine-binding residues include Ser715 and Asp759. The chain crosses the membrane as a helical span at residues 844 to 864; the sequence is MAGVFILVGVGIAGGVGLIII. At 865–1004 the chain is on the cytoplasmic side; sequence EVIYKKHQVK…YTSDVSHLVV (140 aa). Positions 980 to 1004 are disordered; sequence TRPQQNILPPRYSPGYTSDVSHLVV. Residues 994–1004 are compositionally biased toward polar residues; sequence GYTSDVSHLVV.

This sequence belongs to the glutamate-gated ion channel (TC 1.A.10.1) family. Forms a heteromeric NMDA channel with Nmdar2.

It is found in the cell membrane. The protein localises to the postsynaptic cell membrane. Its subcellular location is the postsynaptic density. NMDA receptor subtype of glutamate-gated ion channels with high calcium permeability and voltage-dependent sensitivity to magnesium. Mediated by glycine. This protein plays a key role in synaptic plasticity, synaptogenesis, excitotoxicity, memory acquisition and learning. It mediates neuronal functions in glutamate neurotransmission. Is involved in the cell surface targeting of NMDA receptors. Plays a role in associative learning and in long-term memory consolidation. This is Glutamate [NMDA] receptor subunit 1 from Drosophila persimilis (Fruit fly).